The following is a 257-amino-acid chain: Low affinity immunoglobulin gamma Fc region receptor III-A (257 aa).

A signal peptide spans 1 to 19 (MWQLLSPTALLLLVSVPGT). The Extracellular segment spans residues 20-209 (HAEDPPKSVV…ILSFFLPWHQ (190 aa)). 2 Ig-like C2-type domains span residues 25-104 (PKSV…LRLE) and 108-190 (GWLL…VKVT). Intrachain disulfides connect C48-C90 and C129-C173. Residues N64, N134, and N162 are each glycosylated (N-linked (GlcNAc...) asparagine). Residue D181 is glycosylated (N-linked (GlcNAc...) asparagine; in variant N-181). The helical transmembrane segment at 210–230 (IIFCLVMGFLFAVDTGLYFSV) threads the bilayer. The Cytoplasmic portion of the chain corresponds to 231–257 (RKVLRSSKEDWRNGKVTWSRDPADKGG).

In terms of assembly, forms a heterooligomeric complex with ITAM-containing signaling subunits FCER1G. Interacts (via transmembrane domain) with signaling subunits; this interaction is a prerequisite for receptor complex expression on the cell surface and intracellular signal transduction. Binds the Fc region of antigen-complexed IgG. In terms of tissue distribution, expressed in polymorphonuclear leukocytes, pulmonary alveolar macrophages and peripheral blood mononuclear cells (at protein level). Found in spleen, and at very low levels in lymph nodes but not in thymus or liver.

It is found in the cell membrane. Its function is as follows. Receptor for the invariable Fc fragment of immunoglobulin gamma (IgG). Optimally activated upon binding of clustered antigen-IgG complexes displayed on cell surfaces, triggers lysis of antibody-coated cells, a process known as antibody-dependent cellular cytotoxicity (ADCC). Does not bind free monomeric IgG, thus avoiding inappropriate effector cell activation in the absence of antigenic trigger. Mediates IgG effector functions on natural killer (NK) cells. Binds antigen-IgG complexes generated upon infection and triggers NK cell-dependent cytokine production and degranulation to limit viral load and propagation. Fc-binding subunit that associates with FCER1G adapter to form functional signaling complexes. Following the engagement of antigen-IgG complexes, triggers phosphorylation of immunoreceptor tyrosine-based activation motif (ITAM)-containing adapter with subsequent activation of phosphatidylinositol 3-kinase signaling and sustained elevation of intracellular calcium that ultimately drive NK cell activation. Mediates enhanced ADCC in response to afucosylated IgGs. This is Low affinity immunoglobulin gamma Fc region receptor III-A from Sus scrofa (Pig).